Here is a 119-residue protein sequence, read N- to C-terminus: Ig heavy chain V region X44 (119 aa).

The Ig-like domain occupies 1 to 117 (EVKLLESGGG…WGQGTLVTVS (117 aa)).

This Mus musculus (Mouse) protein is Ig heavy chain V region X44.